A 183-amino-acid chain; its full sequence is 2-hydroxy-1,4-benzoquinone reductase (183 aa).

Residues 11–18 (SLRRDSFN), 77–80 (EYNR), and S113 each bind FMN.

Belongs to the SsuE family. As to quaternary structure, homotetramer. FMN is required as a cofactor.

It carries out the reaction 2-hydroxy-1,4-benzoquinone + NADH + 2 H(+) = benzene-1,2,4-triol + NAD(+). Functionally, involved in the metabolism of 4-aminophenol. Catalyzes the reduction of the auto-oxidation product 2-hydroxy-1,4-benzoquinone back to hydroxyquinol. Has a broad substrate specificity toward benzoquinones, converting them to the corresponding 1,4-benzenediols. In Burkholderia sp, this protein is 2-hydroxy-1,4-benzoquinone reductase.